We begin with the raw amino-acid sequence, 166 residues long: Mitochondrial inner membrane protease subunit 1 (166 aa).

Residues S40 and K83 contribute to the active site.

This sequence belongs to the peptidase S26 family. IMP1 subfamily. Heterodimer of 2 subunits, IMMPL1 and IMMPL2.

It is found in the mitochondrion inner membrane. Its function is as follows. Catalyzes the removal of transit peptides required for the targeting of proteins from the mitochondrial matrix, across the inner membrane, into the inter-membrane space. Known to process the nuclear encoded protein DIABLO. This chain is Mitochondrial inner membrane protease subunit 1 (Immp1l), found in Mus musculus (Mouse).